The sequence spans 139 residues: Small ribosomal subunit protein bS6 (139 aa).

This sequence belongs to the bacterial ribosomal protein bS6 family.

Its function is as follows. Binds together with bS18 to 16S ribosomal RNA. The sequence is that of Small ribosomal subunit protein bS6 from Borreliella afzelii (strain PKo) (Borrelia afzelii).